Consider the following 343-residue polypeptide: Ribosomal RNA small subunit methyltransferase C (343 aa).

This sequence belongs to the methyltransferase superfamily. RsmC family. As to quaternary structure, monomer.

It localises to the cytoplasm. The enzyme catalyses guanosine(1207) in 16S rRNA + S-adenosyl-L-methionine = N(2)-methylguanosine(1207) in 16S rRNA + S-adenosyl-L-homocysteine + H(+). Its function is as follows. Specifically methylates the guanine in position 1207 of 16S rRNA in the 30S particle. The sequence is that of Ribosomal RNA small subunit methyltransferase C from Escherichia coli O7:K1 (strain IAI39 / ExPEC).